The chain runs to 82 residues: Cytochrome b-c1 complex subunit 8 (82 aa).

At Gly-2 to Leu-39 the chain is on the mitochondrial matrix side. An N6-acetyllysine; alternate modification is found at Lys-33. Lys-33 is modified (N6-succinyllysine; alternate). The chain crosses the membrane as a helical span at residues Arg-40–Glu-68. Residues Lys-69–Arg-82 lie on the Mitochondrial intermembrane side of the membrane.

This sequence belongs to the UQCRQ/QCR8 family. In terms of assembly, component of the ubiquinol-cytochrome c oxidoreductase (cytochrome b-c1 complex, complex III, CIII), a multisubunit enzyme composed of 11 subunits. The complex is composed of 3 respiratory subunits cytochrome b, cytochrome c1 and Rieske protein UQCRFS1, 2 core protein subunits UQCRC1/QCR1 and UQCRC2/QCR2, and 6 low-molecular weight protein subunits UQCRH/QCR6, UQCRB/QCR7, UQCRQ/QCR8, UQCR10/QCR9, UQCR11/QCR10 and subunit 9, the cleavage product of Rieske protein UQCRFS1. The complex exists as an obligatory dimer and forms supercomplexes (SCs) in the inner mitochondrial membrane with NADH-ubiquinone oxidoreductase (complex I, CI) and cytochrome c oxidase (complex IV, CIV), resulting in different assemblies (supercomplex SCI(1)III(2)IV(1) and megacomplex MCI(2)III(2)IV(2)). Interacts with UQCC6.

The protein resides in the mitochondrion inner membrane. Component of the ubiquinol-cytochrome c oxidoreductase, a multisubunit transmembrane complex that is part of the mitochondrial electron transport chain which drives oxidative phosphorylation. The respiratory chain contains 3 multisubunit complexes succinate dehydrogenase (complex II, CII), ubiquinol-cytochrome c oxidoreductase (cytochrome b-c1 complex, complex III, CIII) and cytochrome c oxidase (complex IV, CIV), that cooperate to transfer electrons derived from NADH and succinate to molecular oxygen, creating an electrochemical gradient over the inner membrane that drives transmembrane transport and the ATP synthase. The cytochrome b-c1 complex catalyzes electron transfer from ubiquinol to cytochrome c, linking this redox reaction to translocation of protons across the mitochondrial inner membrane, with protons being carried across the membrane as hydrogens on the quinol. In the process called Q cycle, 2 protons are consumed from the matrix, 4 protons are released into the intermembrane space and 2 electrons are passed to cytochrome c. The chain is Cytochrome b-c1 complex subunit 8 (UQCRQ) from Bos taurus (Bovine).